A 264-amino-acid polypeptide reads, in one-letter code: MRILVEIAYQGNNFLGFQIQQNGRTVQQQFEKLLQRIHKRHVRIHPSSRTDRGVHAIQQYFHFDTDLNIPMSQWQYAMNRTLPDDIYVNNVVTVDDDFHCRYDCVGKRYRYKVYQAQQRDPFQSGLKTFIPEPLDLDKMNRAAQQFIGTHDFTGFCSQKTEVESKVRTLYQSEIVKTDDGFDYIVTGSGFLYNMVRVLVAFLIEVGKGRHEVSDVPKLLESKNRKNVPFTAPAEGLYLEKIYLDENELLKDFGNDIKIHRKKSL.

The Nucleophile role is filled by Asp-51. Tyr-109 provides a ligand contact to substrate.

Belongs to the tRNA pseudouridine synthase TruA family. As to quaternary structure, homodimer.

The enzyme catalyses uridine(38/39/40) in tRNA = pseudouridine(38/39/40) in tRNA. Its function is as follows. Formation of pseudouridine at positions 38, 39 and 40 in the anticodon stem and loop of transfer RNAs. The protein is tRNA pseudouridine synthase A of Staphylococcus aureus (strain MRSA252).